The primary structure comprises 92 residues: MSRSLKKGPFVADHLLTKVENLNEKGEKQVIKTWSRASTIIPQMIGHTIAVHNGRQHVPVYVSEQMVGHKLGEFAPTRTFKSHSKGDKKARM.

The protein belongs to the universal ribosomal protein uS19 family.

Functionally, protein S19 forms a complex with S13 that binds strongly to the 16S ribosomal RNA. This chain is Small ribosomal subunit protein uS19, found in Acaryochloris marina (strain MBIC 11017).